The sequence spans 113 residues: N-alpha-acetyltransferase 38-A, NatC auxiliary subunit (113 aa).

The segment at 1–29 (MAAVLEENGCSRQSSPSAGDSDAEPGDTA) is disordered. The 79-residue stretch at 28 to 106 (TARHKLESLL…IVSIQVELES (79 aa)) folds into the Sm domain.

Belongs to the snRNP Sm proteins family. As to quaternary structure, component of the N-terminal acetyltransferase C (NatC) complex, which is composed of naa35, naa38 and naa30.

It localises to the cytoplasm. In terms of biological role, auxillary component of the N-terminal acetyltransferase C (NatC) complex which catalyzes acetylation of N-terminal methionine residues. The polypeptide is N-alpha-acetyltransferase 38-A, NatC auxiliary subunit (naa38-a) (Xenopus laevis (African clawed frog)).